We begin with the raw amino-acid sequence, 130 residues long: Putative pre-16S rRNA nuclease (130 aa).

The protein belongs to the YqgF nuclease family.

The protein localises to the cytoplasm. In terms of biological role, could be a nuclease involved in processing of the 5'-end of pre-16S rRNA. In Sulfurimonas denitrificans (strain ATCC 33889 / DSM 1251) (Thiomicrospira denitrificans (strain ATCC 33889 / DSM 1251)), this protein is Putative pre-16S rRNA nuclease.